A 401-amino-acid chain; its full sequence is Elongation factor Tu (401 aa).

A tr-type G domain is found at 10-209; sequence KPHINVGTIG…AVDEYIPTPQ (200 aa). The G1 stretch occupies residues 19-26; it reads GHVDHGKT. 19-26 contacts GTP; it reads GHVDHGKT. Threonine 26 is a binding site for Mg(2+). The tract at residues 60-64 is G2; the sequence is GITIA. The segment at 81-84 is G3; that stretch reads DCPG. GTP is bound by residues 81–85 and 136–139; these read DCPGH and NKVD. Residues 136–139 form a G4 region; it reads NKVD. A G5 region spans residues 174–176; sequence SAR.

Belongs to the TRAFAC class translation factor GTPase superfamily. Classic translation factor GTPase family. EF-Tu/EF-1A subfamily. As to quaternary structure, monomer.

It is found in the cytoplasm. It carries out the reaction GTP + H2O = GDP + phosphate + H(+). GTP hydrolase that promotes the GTP-dependent binding of aminoacyl-tRNA to the A-site of ribosomes during protein biosynthesis. The polypeptide is Elongation factor Tu (Chloroflexus aurantiacus (strain ATCC 29366 / DSM 635 / J-10-fl)).